A 228-amino-acid polypeptide reads, in one-letter code: uncharacterized protein (228 aa).

Positions methionine 1–alanine 28 are cleaved as a signal peptide.

This is an uncharacterized protein from Bacillus subtilis (strain 168).